Reading from the N-terminus, the 515-residue chain is FAD-dependent oxidoreductase domain-containing protein 1 homolog (515 aa).

The interval A18–L37 is disordered. The helical transmembrane segment at V100–L116 threads the bilayer.

In terms of assembly, associates with mitochondrial complex I assembly intermediates during its biogenesis. FAD serves as cofactor.

The protein localises to the mitochondrion inner membrane. Its function is as follows. Involved in the assembly of the mitochondrial membrane respiratory chain NADH dehydrogenase (Complex I). This Drosophila melanogaster (Fruit fly) protein is FAD-dependent oxidoreductase domain-containing protein 1 homolog.